A 1039-amino-acid chain; its full sequence is Probable inorganic carbon transporter subunit DabA 1 (1039 aa).

Zn(2+) is bound by residues C462, D464, H721, and C736.

This sequence belongs to the inorganic carbon transporter (TC 9.A.2) DabA family. As to quaternary structure, forms a complex with DabB. The cofactor is Zn(2+).

The protein resides in the cell inner membrane. In terms of biological role, part of an energy-coupled inorganic carbon pump. The polypeptide is Probable inorganic carbon transporter subunit DabA 1 (Nitrobacter hamburgensis (strain DSM 10229 / NCIMB 13809 / X14)).